Reading from the N-terminus, the 174-residue chain is NADH-ubiquinone oxidoreductase chain 6 (174 aa).

5 helical membrane-spanning segments follow: residues 1–21 (MTYT…GFSS), 24–44 (SPIY…AVIL), 47–67 (GGGY…MVVF), 86–106 (VEVL…VLWA), and 151–171 (WLVV…IEIA).

Belongs to the complex I subunit 6 family. In terms of assembly, core subunit of respiratory chain NADH dehydrogenase (Complex I) which is composed of 45 different subunits.

Its subcellular location is the mitochondrion inner membrane. It catalyses the reaction a ubiquinone + NADH + 5 H(+)(in) = a ubiquinol + NAD(+) + 4 H(+)(out). Core subunit of the mitochondrial membrane respiratory chain NADH dehydrogenase (Complex I) which catalyzes electron transfer from NADH through the respiratory chain, using ubiquinone as an electron acceptor. Essential for the catalytic activity and assembly of complex I. This is NADH-ubiquinone oxidoreductase chain 6 (MT-ND6) from Hylobates lar (Lar gibbon).